A 131-amino-acid chain; its full sequence is Fluoride-specific ion channel FluC 1 (131 aa).

3 helical membrane-spanning segments follow: residues 38–58 (FPLS…IAMM), 69–89 (TVMM…TALN), and 108–128 (IATV…ALLA). Residues Gly-79 and Ser-82 each contribute to the Na(+) site.

It belongs to the fluoride channel Fluc/FEX (TC 1.A.43) family.

Its subcellular location is the cell membrane. The enzyme catalyses fluoride(in) = fluoride(out). With respect to regulation, na(+) is not transported, but it plays an essential structural role and its presence is essential for fluoride channel function. Its function is as follows. Fluoride-specific ion channel. Important for reducing fluoride concentration in the cell, thus reducing its toxicity. This Bifidobacterium longum (strain NCC 2705) protein is Fluoride-specific ion channel FluC 1.